The primary structure comprises 567 residues: Membrane protein insertase YidC (567 aa).

Residues 3 to 23 traverse the membrane as a helical segment; that stretch reads IQRIVLFAGLAIVSYLMVLAW. A disordered region spans residues 32–80; it reads TEQVAEAQSSSDSSATNSTDDMILPEDNNAGGEEFATPETGSLASTSAN. Positions 40–52 are enriched in low complexity; it reads SSSDSSATNSTDD. Residues 70-80 are compositionally biased toward polar residues; that stretch reads ETGSLASTSAN. 5 consecutive transmembrane segments (helical) span residues 354–374, 378–398, 445–465, 485–505, and 522–542; these read FGWL…FYGL, WGVA…HLSA, GGCL…WVLF, MDPY…QMSL, and PLIF…YWLV.

Belongs to the OXA1/ALB3/YidC family. Type 1 subfamily. As to quaternary structure, interacts with the Sec translocase complex via SecD. Specifically interacts with transmembrane segments of nascent integral membrane proteins during membrane integration.

It is found in the cell inner membrane. In terms of biological role, required for the insertion and/or proper folding and/or complex formation of integral membrane proteins into the membrane. Involved in integration of membrane proteins that insert both dependently and independently of the Sec translocase complex, as well as at least some lipoproteins. Aids folding of multispanning membrane proteins. This Marinobacter nauticus (strain ATCC 700491 / DSM 11845 / VT8) (Marinobacter aquaeolei) protein is Membrane protein insertase YidC.